The chain runs to 2898 residues: Papilin (2898 aa).

A signal peptide spans 1–26; the sequence is MDLSRRLCSTALVAFIVLASIHDSQS. Positions 43–67 are disordered; sequence LPESSVTPGGEGNDPDEWTPWSSPS. Positions 57-111 constitute a TSP type-1 1 domain; the sequence is PDEWTPWSSPSDCSRTCGGGVSYQTRECLRRDDRGEAVCSGGSRRYFSCNTQDCP. Disulfide bonds link C69–C105, C73–C110, and C84–C95. N-linked (GlcNAc...) asparagine glycans are attached at residues N258 and N319. The region spanning 338-397 is the TSP type-1 2 domain; the sequence is DTHTWTHHQFNACSASCGGGSQSRKVTCNNRITLAEVNPSLCDQKSKPVEEQACGTEPCA. A glycan (N-linked (GlcNAc...) asparagine) is linked at N419. 4 consecutive TSP type-1 domains span residues 461–521, 522–575, 576–633, and 639–694; these read NCPK…TPCE, GVDW…KSPK, CEAQ…QDCE, and CPGE…EACT. 3 disulfide bridges follow: C462–C504, C473–C515, and C477–C520. N-linked (GlcNAc...) asparagine glycosylation occurs at N669. Disordered stretches follow at residues 699 to 1252 and 1323 to 1367; these read LPLT…CAKS and GEND…PDTK. Composition is skewed to acidic residues over residues 708 to 720 and 727 to 738; these read IEDDEEDCDEDGI and LSDDEKSEDVID. A compositionally biased stretch (polar residues) spans 768–788; it reads STGTTFEGSGYDSESTTDSGI. A compositionally biased stretch (low complexity) spans 801–879; it reads EASTDLSSST…ASASESTDVS (79 aa). N889, N914, N917, N950, and N1064 each carry an N-linked (GlcNAc...) asparagine glycan. Low complexity predominate over residues 890 to 1053; the sequence is ASDSTPESST…SDNTDITTDG (164 aa). The segment covering 1064-1073 has biased composition (polar residues); the sequence is NASTEGSTEG. Low complexity-rich tracts occupy residues 1076–1091 and 1104–1215; these read EDTTISTESSGSTEST and STVE…IWST. The span at 1237 to 1248 shows a compositional bias: basic residues; that stretch reads SKPRKCKPKKST. The segment covering 1330–1351 has biased composition (low complexity); sequence PETTTVPPTTTTEETQPETTTE. 2 N-linked (GlcNAc...) asparagine glycosylation sites follow: N1489 and N1623. 15 cysteine pairs are disulfide-bonded: C1612–C1662, C1621–C1645, C1637–C1658, C1671–C1721, C1680–C1704, C1696–C1717, C1730–C1780, C1739–C1763, C1755–C1776, C1790–C1840, C1799–C1823, C1815–C1836, C1849–C1899, C1858–C1882, and C1874–C1895. BPTI/Kunitz inhibitor domains follow at residues 1612–1662, 1671–1721, 1730–1780, 1790–1840, and 1849–1899; these read CGLP…KDTC, CLLP…QGTC, CEQP…NYNC, CALP…EDHC, and CEIP…LARC. N-linked (GlcNAc...) asparagine glycosylation is present at N1750. Positions 1902-1928 are disordered; it reads KPEPTTTTPATRPQPSRQDVCDEEPAP. The span at 1905–1916 shows a compositional bias: low complexity; it reads PTTTTPATRPQP. 3 cysteine pairs are disulfide-bonded: C1922–C1972, C1931–C1955, and C1947–C1968. One can recognise a BPTI/Kunitz inhibitor 6 domain in the interval 1922-1972; sequence CDEEPAPGECSTWVLKWHFDRKIGACRQFYYGNCGGNGNRFETENDCQQRC. Residues 1972–2004 are disordered; the sequence is CLSQEPPAPTPPRAPAPTRQPDPAPTVAQCSQP. Residues 1977–1995 show a composition bias toward pro residues; it reads PPAPTPPRAPAPTRQPDPA. 18 disulfide bridges follow: C2001–C2051, C2010–C2034, C2026–C2047, C2071–C2121, C2080–C2104, C2096–C2117, C2128–C2178, C2137–C2161, C2153–C2174, C2194–C2244, C2203–C2227, C2219–C2240, C2253–C2303, C2262–C2286, C2278–C2299, C2318–C2371, C2327–C2354, and C2346–C2367. BPTI/Kunitz inhibitor domains are found at residues 2001 to 2051, 2071 to 2121, 2128 to 2178, 2194 to 2244, 2253 to 2303, and 2318 to 2371; these read CSQP…SARC, CFLA…QNEC, CALP…LNFC, CAEP…ERQC, CNEP…QTVC, and CLLP…TNQC. N-linked (GlcNAc...) asparagine glycosylation occurs at N2020. An N-linked (GlcNAc...) asparagine glycan is attached at N2083. N2205 carries an N-linked (GlcNAc...) asparagine glycan. A WAP domain is found at 2452 to 2498; that stretch reads DIYKPGECPALSANASGCARECYTDADCRGDNKCCSDGCGQLCVHPA. 3 N-linked (GlcNAc...) asparagine glycosylation sites follow: N2465, N2552, and N2625. Ig-like C2-type domains follow at residues 2523–2607, 2617–2697, and 2749–2840; these read PKEA…REVA, PAYI…RPVS, and PTVN…ANVS. Cysteines 2543 and 2592 form a disulfide. 2 disulfide bridges follow: C2640–C2687 and C2775–C2824. Residues N2784 and N2838 are each glycosylated (N-linked (GlcNAc...) asparagine). The region spanning 2847-2886 is the PLAC domain; that stretch reads VSPECVDNPYFANCKLIVKGRYCSNPYYTQFCCRSCTLAG.

It belongs to the papilin family. In terms of assembly, homooligomer; disulfide-linked. In terms of processing, N-glycosylated. Sulfated. In terms of tissue distribution, during embryogenesis it first appears in the extracellular matrix during gastrulation and early mesoderm development at sites where basement membranes do not subsequently form. Later, migrating hemocytes prominently produce it together with other ECM components, in basement membranes that underlie epithelia and envelop muscles and emerging organs. At various life stages, it can be synthesized by other cells, such as those of the fat body, and it also occurs in a few, circumscribed regions of relatively amorphous ECM. Isoform E is specifically expressed in ECM of heart and proventriculus. Isoform C is a major component of transitory ECM deposit in the early embryo. Isoform F is a major component of the basement membrane during embryogenesis.

Its subcellular location is the secreted. The protein resides in the extracellular space. The protein localises to the extracellular matrix. It localises to the basement membrane. Essential extracellular matrix (ECM) protein that influences cell rearrangements. May act by modulating metalloproteinases action during organogenesis. Able to non-competitively inhibit procollagen N-proteinase, an ADAMTS metalloproteinase. The chain is Papilin (Ppn) from Drosophila melanogaster (Fruit fly).